The primary structure comprises 37 residues: Large ribosomal subunit protein bL36 (37 aa).

This sequence belongs to the bacterial ribosomal protein bL36 family.

The sequence is that of Large ribosomal subunit protein bL36 from Syntrophomonas wolfei subsp. wolfei (strain DSM 2245B / Goettingen).